The following is a 280-amino-acid chain: tRNA(Ile)-lysidine synthase, plastid (280 aa).

28-33 is an ATP binding site; sequence SAGQDS.

Belongs to the tRNA(Ile)-lysidine synthase family.

The protein localises to the plastid. The catalysed reaction is cytidine(34) in tRNA(Ile2) + L-lysine + ATP = lysidine(34) in tRNA(Ile2) + AMP + diphosphate + H(+). In terms of biological role, ligates lysine onto the cytidine present at position 34 of the AUA codon-specific tRNA(Ile) that contains the anticodon CAU, in an ATP-dependent manner. Cytidine is converted to lysidine, thus changing the amino acid specificity of the tRNA from methionine to isoleucine. The polypeptide is tRNA(Ile)-lysidine synthase, plastid (tilS) (Helicosporidium sp. subsp. Simulium jonesii (Green alga)).